We begin with the raw amino-acid sequence, 155 residues long: Large ribosomal subunit protein uL22c (155 aa).

The protein belongs to the universal ribosomal protein uL22 family. In terms of assembly, part of the 50S ribosomal subunit.

It is found in the plastid. The protein localises to the chloroplast. Functionally, this protein binds specifically to 23S rRNA. The globular domain of the protein is located near the polypeptide exit tunnel on the outside of the subunit, while an extended beta-hairpin is found that lines the wall of the exit tunnel in the center of the 70S ribosome. The protein is Large ribosomal subunit protein uL22c (rpl22) of Coffea arabica (Arabian coffee).